Consider the following 249-residue polypeptide: Aspartate/glutamate leucyltransferase (249 aa).

Belongs to the R-transferase family. Bpt subfamily.

The protein resides in the cytoplasm. The enzyme catalyses N-terminal L-glutamyl-[protein] + L-leucyl-tRNA(Leu) = N-terminal L-leucyl-L-glutamyl-[protein] + tRNA(Leu) + H(+). It catalyses the reaction N-terminal L-aspartyl-[protein] + L-leucyl-tRNA(Leu) = N-terminal L-leucyl-L-aspartyl-[protein] + tRNA(Leu) + H(+). Functions in the N-end rule pathway of protein degradation where it conjugates Leu from its aminoacyl-tRNA to the N-termini of proteins containing an N-terminal aspartate or glutamate. The sequence is that of Aspartate/glutamate leucyltransferase from Brucella suis (strain ATCC 23445 / NCTC 10510).